A 372-amino-acid chain; its full sequence is uncharacterized protein (372 aa).

Residues 328–353 (KKGQPCKDEDAVTVPLPSSDPGKETQ) form a disordered region.

In terms of biological role, induces the SOS system when expressed in E.coli, therefore, it may play a role in DNA metabolism and/or in genome stability. This is an uncharacterized protein from Saccharomyces cerevisiae (strain ATCC 204508 / S288c) (Baker's yeast).